The following is a 261-amino-acid chain: Undecaprenyl-diphosphatase (261 aa).

6 helical membrane-spanning segments follow: residues 39–59, 76–96, 99–119, 173–193, 206–226, and 238–258; these read NVLLFDILVHLGTLVPLLIIF, LLIIAGTVPTALIGLGFKDFF, LFVSGSTLGIEFIITGLILWL, AAKFSFLLSIPAILGAAVLDL, IDLMPFIVGFFAAMLSGYFAV, and LTWFSYYVWILGVTILVLQAA.

The protein belongs to the UppP family.

It localises to the cell membrane. The catalysed reaction is di-trans,octa-cis-undecaprenyl diphosphate + H2O = di-trans,octa-cis-undecaprenyl phosphate + phosphate + H(+). In terms of biological role, catalyzes the dephosphorylation of undecaprenyl diphosphate (UPP). Confers resistance to bacitracin. This chain is Undecaprenyl-diphosphatase, found in Carboxydothermus hydrogenoformans (strain ATCC BAA-161 / DSM 6008 / Z-2901).